The sequence spans 274 residues: Transcription factor Ovo-like 2 (274 aa).

A compositionally biased stretch (basic residues) spans M1 to S11. The segment at M1–G88 is disordered. A compositionally biased stretch (basic and acidic residues) spans S18 to D29. Positions D50–R74 are enriched in low complexity. 4 consecutive C2H2-type zinc fingers follow at residues H118–H140, H146–H168, Y174–H197, and Y213–H236. Residue S268 is modified to Phosphoserine.

It belongs to the krueppel C2H2-type zinc-finger protein family. In terms of assembly, interacts (via zinc-finger domains) with CEBPA (via bZIP domain); the interaction inhibits the transcription factor activity of CEBPA and is required to repress adipogenesis. Expressed highly in testis, specifically in spermatocytes. Expressed also in skin and at lower levels in the ovary. Expressed in adipose tissues. Expression is lower than in testis and a relatively higher expression level is detected in the stromal vascular fraction (SVF) than in fat cells themselves.

The protein resides in the nucleus. Its function is as follows. Zinc-finger transcription repressor factor. Plays a critical role in maintaining the identity of epithelial lineages by suppressing epithelial-to mesenchymal transition (EMT) mainly through the repression of ZEB1, an EMT inducer. Positively regulates neuronal differentiation. Suppresses cell cycling and terminal differentiation of keratinocytes by directly repressing MYC and NOTCH1. Important for the correct development of primordial germ cells in embryos. Plays dual functions in thermogenesis and adipogenesis to maintain energy balance. Essential for brown/beige adipose tissue-mediated thermogenesis, is necessary for the development of brown adipocytes. In white adipose tissues, limits adipogenesis by blocking CEBPA binding to its transcriptional targets and inhibiting its transcription factor activity. The chain is Transcription factor Ovo-like 2 from Mus musculus (Mouse).